A 685-amino-acid polypeptide reads, in one-letter code: DEAD-box ATP-dependent RNA helicase 7 (685 aa).

The disordered stretch occupies residues 1–89 (MPSISMMSDA…SELVQADDLK (89 aa)). Composition is skewed to basic and acidic residues over residues 22–42 (MKSE…SSSK) and 66–78 (AVDL…KSDN). The short motif at 107-135 (NSLSNFRISKPLKDVLISKGIKALFPIQA) is the Q motif element. The Helicase ATP-binding domain occupies 138 to 320 (FDNVIDGCDL…TRFLKSAKKT (183 aa)). ATP is bound at residue 151–158 (ARTGQGKT). The DEAD box motif lies at 266–269 (DEAD). The Helicase C-terminal domain maps to 349-491 (DLIPDIIRCY…LSAPQPVDVA (143 aa)).

It belongs to the DEAD box helicase family. DDX21/DDX50 subfamily.

Its subcellular location is the nucleus. It catalyses the reaction ATP + H2O = ADP + phosphate + H(+). The chain is DEAD-box ATP-dependent RNA helicase 7 (RH7) from Spinacia oleracea (Spinach).